Consider the following 703-residue polypeptide: 1,4-alpha-glucan-branching enzyme (703 aa).

Residues Trp-93 and Lys-130 each coordinate (1,4-alpha-D-glucosyl)n. Asp-355 acts as the Nucleophile in catalysis. Glu-415 acts as the Proton donor in catalysis.

The protein belongs to the glycosyl hydrolase 13 family. GlgB subfamily.

It localises to the cytoplasm. It carries out the reaction Transfers a segment of a (1-&gt;4)-alpha-D-glucan chain to a primary hydroxy group in a similar glucan chain.. It functions in the pathway glycan biosynthesis; glycogen biosynthesis. Its function is as follows. Glycogen-branching enzyme participates in the glycogen biosynthetic process along with glycogenin and glycogen synthase. Generates alpha-1,6-glucosidic branches from alpha-1,4-linked glucose chains, to increase solubility of the glycogen polymer. This Eremothecium gossypii (strain ATCC 10895 / CBS 109.51 / FGSC 9923 / NRRL Y-1056) (Yeast) protein is 1,4-alpha-glucan-branching enzyme (GLC3).